Reading from the N-terminus, the 63-residue chain is MRNPVVWGMIYFAVGCIFTYLAASSPGSMWSFYSILLMVFAAYNISISFKMFAFSFKIKKNQK.

The first 15 residues, 1 to 15, serve as a signal peptide directing secretion; sequence MRNPVVWGMIYFAVG. Cysteine 16 is lipidated: N-palmitoyl cysteine. The S-diacylglycerol cysteine moiety is linked to residue cysteine 16. The helical transmembrane segment at 34–56 threads the bilayer; the sequence is SILLMVFAAYNISISFKMFAFSF.

Its subcellular location is the cell membrane. This is an uncharacterized protein from Bacillus subtilis (strain 168).